A 547-amino-acid chain; its full sequence is Probable bifunctional tRNA threonylcarbamoyladenosine biosynthesis protein (547 aa).

The kae1 stretch occupies residues 1–329 (MGNSNELICI…FRTDMVDVNW (329 aa)). Residues His-112, His-116, and Tyr-133 each contribute to the Fe cation site. Residues 133-137 (YVSGG), Asp-165, Gly-178, Glu-182, and Asn-262 each bind L-threonylcarbamoyladenylate. Asp-290 lines the Fe cation pocket. Positions 346–547 (QIPRHLIGKG…KEVEKRGRYL (202 aa)) constitute a Protein kinase domain. ATP contacts are provided by residues 352 to 360 (IGKGAEADI) and Lys-373. Asp-465 serves as the catalytic Proton acceptor; for kinase activity.

It in the N-terminal section; belongs to the KAE1 / TsaD family. This sequence in the C-terminal section; belongs to the protein kinase superfamily. Tyr protein kinase family. BUD32 subfamily. Component of the KEOPS complex that consists of Kae1, Bud32, Cgi121 and Pcc1; the whole complex dimerizes. Fe(2+) is required as a cofactor.

The protein resides in the cytoplasm. The enzyme catalyses L-seryl-[protein] + ATP = O-phospho-L-seryl-[protein] + ADP + H(+). It carries out the reaction L-threonyl-[protein] + ATP = O-phospho-L-threonyl-[protein] + ADP + H(+). It catalyses the reaction L-threonylcarbamoyladenylate + adenosine(37) in tRNA = N(6)-L-threonylcarbamoyladenosine(37) in tRNA + AMP + H(+). Functionally, required for the formation of a threonylcarbamoyl group on adenosine at position 37 (t(6)A37) in tRNAs that read codons beginning with adenine. Is a component of the KEOPS complex that is probably involved in the transfer of the threonylcarbamoyl moiety of threonylcarbamoyl-AMP (TC-AMP) to the N6 group of A37. The Kae1 domain likely plays a direct catalytic role in this reaction. The Bud32 domain probably displays kinase activity that regulates Kae1 function. The polypeptide is Probable bifunctional tRNA threonylcarbamoyladenosine biosynthesis protein (Methanococcus vannielii (strain ATCC 35089 / DSM 1224 / JCM 13029 / OCM 148 / SB)).